The chain runs to 468 residues: UDP-N-acetylmuramate--L-alanine ligase (468 aa).

Residue 112–118 participates in ATP binding; the sequence is GTHGKTT.

The protein belongs to the MurCDEF family.

It is found in the cytoplasm. It catalyses the reaction UDP-N-acetyl-alpha-D-muramate + L-alanine + ATP = UDP-N-acetyl-alpha-D-muramoyl-L-alanine + ADP + phosphate + H(+). The protein operates within cell wall biogenesis; peptidoglycan biosynthesis. Cell wall formation. In Bordetella bronchiseptica (strain ATCC BAA-588 / NCTC 13252 / RB50) (Alcaligenes bronchisepticus), this protein is UDP-N-acetylmuramate--L-alanine ligase.